Reading from the N-terminus, the 464-residue chain is Tyrosine aminotransferase (464 aa).

Lysine 284 bears the N6-(pyridoxal phosphate)lysine mark.

This sequence belongs to the class-I pyridoxal-phosphate-dependent aminotransferase family. As to quaternary structure, homodimer. The cofactor is pyridoxal 5'-phosphate. In terms of tissue distribution, expressed in the muscle. Expressed in the hypodermis and intestine.

It catalyses the reaction L-tyrosine + 2-oxoglutarate = 3-(4-hydroxyphenyl)pyruvate + L-glutamate. The catalysed reaction is 3-hydroxy-L-phenylalanine + 2-oxoglutarate = 3-(3-hydroxyphenyl)pyruvate + L-glutamate. It functions in the pathway amino-acid degradation; L-phenylalanine degradation; acetoacetate and fumarate from L-phenylalanine: step 2/6. Functionally, transaminase involved in tyrosine breakdown. Converts tyrosine to p-hydroxyphenylpyruvate. Has no transaminase activity towards phenylalanine. Plays protective role against oxidative stress, metabolizing meta-tyrosine and negatively regulating its accumulation. Plays a role in modulating the daf-2/insulin receptor-like transduction pathway through regulating tyrosine levels. Negatively regulates dauer formation. Plays a role in longevity. The sequence is that of Tyrosine aminotransferase from Caenorhabditis elegans.